We begin with the raw amino-acid sequence, 151 residues long: Small ribosomal subunit protein uS15 (151 aa).

The protein belongs to the universal ribosomal protein uS15 family.

This is Small ribosomal subunit protein uS15 (RPS13) from Candida maltosa (Yeast).